Reading from the N-terminus, the 546-residue chain is Glutamate--tRNA ligase (546 aa).

The 'HIGH' region motif lies at 42–52; that stretch reads PSPTGFIHLGN. The 'KMSKS' region motif lies at 293 to 297; it reads KLSKR. Lys-296 contributes to the ATP binding site.

The protein belongs to the class-I aminoacyl-tRNA synthetase family. Glutamate--tRNA ligase type 1 subfamily. As to quaternary structure, monomer.

The protein resides in the cytoplasm. The enzyme catalyses tRNA(Glu) + L-glutamate + ATP = L-glutamyl-tRNA(Glu) + AMP + diphosphate. In terms of biological role, catalyzes the attachment of glutamate to tRNA(Glu) in a two-step reaction: glutamate is first activated by ATP to form Glu-AMP and then transferred to the acceptor end of tRNA(Glu). The protein is Glutamate--tRNA ligase of Acetivibrio thermocellus (strain ATCC 27405 / DSM 1237 / JCM 9322 / NBRC 103400 / NCIMB 10682 / NRRL B-4536 / VPI 7372) (Clostridium thermocellum).